The chain runs to 366 residues: MSHPYPPPRDKKGSRIGFTTGANAAAAAKAAALALLGEAPEVVDIWLPAGWRQPFRVFRLERKGDGVLVGMIKDAGDDPDVTHGAEIQAFVRFASEDRLEGGEGVGVVTKPGLGVPVGEPAINPVPRRMIWEAVREVTERPLAVTIAIPGGEELAKKTLNPRLGILGGLSVLGTTGVVKPYSTSAFRMSVVQAVGVARANGLLEIAATTGGKSERFAQRLLPHLPEMAFIEMGDFVGDVLRAARKVGVEVVRVVGMIGKISKMADGKTMTHAAGGEVNLSLLLSLLKEAGASPKALKEAEGAATARRFLEIALEEGLELFFVNLVRLAQEKLQAYIGERPFVSVALTDFDEGRCLAAWPDREVYRG.

This sequence belongs to the CbiD family.

It catalyses the reaction Co-precorrin-5B + S-adenosyl-L-methionine = Co-precorrin-6A + S-adenosyl-L-homocysteine. Its pathway is cofactor biosynthesis; adenosylcobalamin biosynthesis; cob(II)yrinate a,c-diamide from sirohydrochlorin (anaerobic route): step 6/10. Functionally, catalyzes the methylation of C-1 in cobalt-precorrin-5B to form cobalt-precorrin-6A. The chain is Cobalt-precorrin-5B C(1)-methyltransferase from Thermus thermophilus (strain ATCC BAA-163 / DSM 7039 / HB27).